Here is a 120-residue protein sequence, read N- to C-terminus: Ig heavy chain V region 36-65 (120 aa).

Residues 1–111 (VQLQQSGAEL…GGSYYFDYWG (111 aa)) form the Ig-like domain.

In Mus musculus (Mouse), this protein is Ig heavy chain V region 36-65.